A 151-amino-acid chain; its full sequence is UPF0178 protein RD1_0321 (151 aa).

It belongs to the UPF0178 family.

The protein is UPF0178 protein RD1_0321 of Roseobacter denitrificans (strain ATCC 33942 / OCh 114) (Erythrobacter sp. (strain OCh 114)).